The primary structure comprises 430 residues: Sorting nexin-4 (430 aa).

Over residues 1-18 (MDSASADASVTGSGNAKG) the composition is skewed to polar residues. A disordered region spans residues 1–22 (MDSASADASVTGSGNAKGSSAE). The 130-residue stretch at 33–162 (LEILVSDPQK…IFLVGNEWDT (130 aa)) folds into the PX domain. A 1,2-diacyl-sn-glycero-3-phospho-(1D-myo-inositol-3-phosphate) contacts are provided by R83, K109, and R128. Positions 351–414 (ASRRDKINKL…NNLADENIKF (64 aa)) form a coiled coil.

The protein belongs to the sorting nexin family.

It is found in the cytoplasm. The protein resides in the cytosol. Its subcellular location is the preautophagosomal structure membrane. It localises to the endosome membrane. Functionally, sorting nexin, involved in the separation or division of vacuoles throughout the entire life cycle of the cells. Involved in retrieval of late-Golgi SNAREs from post-Golgi endosomes to the trans-Golgi network, for cytoplasm to vacuole transport (Cvt), and autophagy of large cargos including mitophagy, pexophagy and glycophagy. The sequence is that of Sorting nexin-4 (SNX4) from Candida glabrata (strain ATCC 2001 / BCRC 20586 / JCM 3761 / NBRC 0622 / NRRL Y-65 / CBS 138) (Yeast).